Reading from the N-terminus, the 452-residue chain is tRNA modification GTPase MnmE (452 aa).

Positions 24, 81, and 120 each coordinate (6S)-5-formyl-5,6,7,8-tetrahydrofolate. A TrmE-type G domain is found at 216-373 (GIKTVIVGAP…LFGAIGRWAD (158 aa)). GTP is bound by residues 226-231 (NVGKSS), 245-251 (SAEPGTT), and 270-273 (DTAG). The Mg(2+) site is built by Ser230 and Thr251. Position 452 (Lys452) interacts with (6S)-5-formyl-5,6,7,8-tetrahydrofolate.

Belongs to the TRAFAC class TrmE-Era-EngA-EngB-Septin-like GTPase superfamily. TrmE GTPase family. As to quaternary structure, homodimer. Heterotetramer of two MnmE and two MnmG subunits. K(+) is required as a cofactor.

It localises to the cytoplasm. In terms of biological role, exhibits a very high intrinsic GTPase hydrolysis rate. Involved in the addition of a carboxymethylaminomethyl (cmnm) group at the wobble position (U34) of certain tRNAs, forming tRNA-cmnm(5)s(2)U34. This Opitutus terrae (strain DSM 11246 / JCM 15787 / PB90-1) protein is tRNA modification GTPase MnmE.